The chain runs to 479 residues: Cardiolipin synthase A (479 aa).

Transmembrane regions (helical) follow at residues 8 to 28 and 38 to 58; these read FFGY…LHAV and IAWA…YLVF. PLD phosphodiesterase domains lie at 218-245 and 392-419; these read VNFR…GDEY and QPGF…DNRS. Active-site residues include His223, Lys225, Asp230, His397, Lys399, and Asp404.

This sequence belongs to the phospholipase D family. Cardiolipin synthase subfamily. ClsA sub-subfamily.

It localises to the cell inner membrane. The enzyme catalyses 2 a 1,2-diacyl-sn-glycero-3-phospho-(1'-sn-glycerol) = a cardiolipin + glycerol. Its function is as follows. Catalyzes the reversible phosphatidyl group transfer from one phosphatidylglycerol molecule to another to form cardiolipin (CL) (diphosphatidylglycerol) and glycerol. This is Cardiolipin synthase A from Pseudomonas putida (strain GB-1).